A 59-amino-acid chain; its full sequence is GEIECSSSECCPSGKHLCKGGFVHYCCPNDRYMSCGILGFGTCYCWKADYYEYGSTPTC.

Post-translationally, contains 5 disulfide bonds.

The protein localises to the secreted. The protein resides in the nematocyst. In Anemonia erythraea (Sea anemone), this protein is U-actitoxin-Aer2a.